A 173-amino-acid polypeptide reads, in one-letter code: ATP synthase subunit delta (173 aa).

The protein belongs to the ATPase delta chain family. As to quaternary structure, F-type ATPases have 2 components, F(1) - the catalytic core - and F(0) - the membrane proton channel. F(1) has five subunits: alpha(3), beta(3), gamma(1), delta(1), epsilon(1). F(0) has three main subunits: a(1), b(2) and c(10-14). The alpha and beta chains form an alternating ring which encloses part of the gamma chain. F(1) is attached to F(0) by a central stalk formed by the gamma and epsilon chains, while a peripheral stalk is formed by the delta and b chains.

The protein resides in the cell inner membrane. F(1)F(0) ATP synthase produces ATP from ADP in the presence of a proton or sodium gradient. F-type ATPases consist of two structural domains, F(1) containing the extramembraneous catalytic core and F(0) containing the membrane proton channel, linked together by a central stalk and a peripheral stalk. During catalysis, ATP synthesis in the catalytic domain of F(1) is coupled via a rotary mechanism of the central stalk subunits to proton translocation. In terms of biological role, this protein is part of the stalk that links CF(0) to CF(1). It either transmits conformational changes from CF(0) to CF(1) or is implicated in proton conduction. In Campylobacter jejuni subsp. jejuni serotype O:6 (strain 81116 / NCTC 11828), this protein is ATP synthase subunit delta.